The following is a 63-amino-acid chain: U7-theraphotoxin-Cg1a (63 aa).

A signal peptide spans 1–21 (MKTSILFVIFGLALLFALSVA). A propeptide spanning residues 22–31 (IEMEEEETDR) is cleaved from the precursor. Intrachain disulfides connect cysteine 33-cysteine 47, cysteine 40-cysteine 52, and cysteine 46-cysteine 59.

In terms of tissue distribution, expressed by the venom gland.

The protein localises to the secreted. Its function is as follows. Inhibits preferentially tetrodotoxin-insensitive sodium currents (Nav) on rat cardiac myocytes (IC(50) is 0.26 uM) and has weaker inhibition activity toward tetrodotoxin-sensitive sodium currents on rat dorsal root ganglion (DRG) sensory neurons (IC(50) is 0.83 uM) and on cockroach dorsal unpaired median (DUM) neurons (IC(50) is 1.19 uM). Has no significant effect on potassium currents on DRG neurons. The polypeptide is U7-theraphotoxin-Cg1a (Chilobrachys guangxiensis (Chinese earth tiger tarantula)).